Consider the following 166-residue polypeptide: 16S rRNA aminocarboxypropyltransferase (166 aa).

Residues T17, V62, I84, Y99, and S103 each coordinate S-adenosyl-L-methionine.

Belongs to the TDD superfamily. TSR3 family.

It localises to the cytoplasm. The catalysed reaction is an N(1)-methylpseudouridine in rRNA + S-adenosyl-L-methionine = N(1)-methyl-N(3)-[(3S)-3-amino-3-carboxypropyl]pseudouridine in rRNA + S-methyl-5'-thioadenosine + H(+). Its function is as follows. Aminocarboxypropyltransferase that catalyzes the aminocarboxypropyl transfer on pseudouridine corresponding to position 914 in M.jannaschii 16S rRNA. It constitutes the last step in biosynthesis of the hypermodified N1-methyl-N3-(3-amino-3-carboxypropyl) pseudouridine (m1acp3-Psi). The sequence is that of 16S rRNA aminocarboxypropyltransferase from Saccharolobus solfataricus (strain ATCC 35092 / DSM 1617 / JCM 11322 / P2) (Sulfolobus solfataricus).